The following is a 605-amino-acid chain: Alpha-1,3-galactosidase A (605 aa).

Positions 1–20 (MKKYLHILPACFLFYAAAHA) are cleaved as a signal peptide. 6 PbH1 repeats span residues 256-278 (SKNI…VSQY), 312-334 (KGKV…NVHG), 421-443 (TPEV…LVTT), 444-466 (PRKV…LIEA), 477-507 (VKDV…HPSN), and 517-547 (HQNI…LFRN).

The protein belongs to the glycosyl hydrolase 110 family. A subfamily.

It carries out the reaction Hydrolysis of terminal, non-reducing branched (1-&gt;3)-alpha-D-galactosidic residues, producing free D-galactose.. The catalysed reaction is Hydrolysis of terminal, non-reducing alpha-D-galactose residues in alpha-D-galactosides, including galactose oligosaccharides, galactomannans and galactolipids.. Alpha-galactosidase that specifically removes branched alpha-1,3-linked galactose residues present in blood group B antigens. Has no activity toward linear alpha-1,3-linked galactose residues. The protein is Alpha-1,3-galactosidase A (glaA) of Bacteroides fragilis (strain YCH46).